The primary structure comprises 209 residues: Holliday junction branch migration complex subunit RuvA (209 aa).

The segment at 1–70 (MINYLRGQAI…EEQPLLYGFG (70 aa)) is domain I. The tract at residues 71 to 149 (TAPERELFRQ…AWRQLREATT (79 aa)) is domain II. Residues 150–158 (TITAILPAA) form a flexible linker region. The segment at 158-209 (AAILEDVQMTLLALGYSQEEIDRAMAVLSQDALFSKNTQPEDWIKGAINWLG) is domain III.

This sequence belongs to the RuvA family. As to quaternary structure, homotetramer. Forms an RuvA(8)-RuvB(12)-Holliday junction (HJ) complex. HJ DNA is sandwiched between 2 RuvA tetramers; dsDNA enters through RuvA and exits via RuvB. An RuvB hexamer assembles on each DNA strand where it exits the tetramer. Each RuvB hexamer is contacted by two RuvA subunits (via domain III) on 2 adjacent RuvB subunits; this complex drives branch migration. In the full resolvosome a probable DNA-RuvA(4)-RuvB(12)-RuvC(2) complex forms which resolves the HJ.

It localises to the cytoplasm. The RuvA-RuvB-RuvC complex processes Holliday junction (HJ) DNA during genetic recombination and DNA repair, while the RuvA-RuvB complex plays an important role in the rescue of blocked DNA replication forks via replication fork reversal (RFR). RuvA specifically binds to HJ cruciform DNA, conferring on it an open structure. The RuvB hexamer acts as an ATP-dependent pump, pulling dsDNA into and through the RuvAB complex. HJ branch migration allows RuvC to scan DNA until it finds its consensus sequence, where it cleaves and resolves the cruciform DNA. This chain is Holliday junction branch migration complex subunit RuvA, found in Microcystis aeruginosa (strain NIES-843 / IAM M-2473).